Here is a 351-residue protein sequence, read N- to C-terminus: Biotin synthase (351 aa).

The region spanning 48–265 (NKVRIHILDN…LCMFRLINPD (218 aa)) is the Radical SAM core domain. Cys-63, Cys-67, and Cys-70 together coordinate [4Fe-4S] cluster. [2Fe-2S] cluster contacts are provided by Cys-107, Cys-139, Cys-199, and Arg-269.

Belongs to the radical SAM superfamily. Biotin synthase family. Homodimer. Requires [4Fe-4S] cluster as cofactor. It depends on [2Fe-2S] cluster as a cofactor.

The enzyme catalyses (4R,5S)-dethiobiotin + (sulfur carrier)-SH + 2 reduced [2Fe-2S]-[ferredoxin] + 2 S-adenosyl-L-methionine = (sulfur carrier)-H + biotin + 2 5'-deoxyadenosine + 2 L-methionine + 2 oxidized [2Fe-2S]-[ferredoxin]. It functions in the pathway cofactor biosynthesis; biotin biosynthesis; biotin from 7,8-diaminononanoate: step 2/2. Functionally, catalyzes the conversion of dethiobiotin (DTB) to biotin by the insertion of a sulfur atom into dethiobiotin via a radical-based mechanism. The protein is Biotin synthase of Leptospira interrogans serogroup Icterohaemorrhagiae serovar Lai (strain 56601).